A 249-amino-acid chain; its full sequence is MGNIVLQLLAILALCIAPARSGWLQGTATFYGGADGSGTMGGACGYGNLYDQGYGINNAALSTPLFNNGASCGQCYLIICNYDKAPSGCRMGTAITVTGTNFCPPNYDLPYGGWCNTTRPHFDMSQPAWENIGIYSAGIVPILYQQVKCWRSGGVRFTITGLNYFELVLVTNMAGSGSIASMSVKGSSTGWIQMSRNWGANWQCLAGLAGQALSFTVTSTGGQTIVFDSVVPAGWSFGQTFSTYQQFDY.

The signal sequence occupies residues methionine 1–serine 21. The 114-residue stretch at glycine 41–glycine 154 folds into the Expansin-like EG45 domain. N-linked (GlcNAc...) asparagine glycosylation occurs at asparagine 116. An Expansin-like CBD domain is found at tyrosine 164–threonine 243.

Belongs to the expansin family. Expansin A subfamily. As to expression, expressed in roots.

Its subcellular location is the secreted. It localises to the cell wall. The protein localises to the membrane. Its function is as follows. May cause loosening and extension of plant cell walls by disrupting non-covalent bonding between cellulose microfibrils and matrix glucans. No enzymatic activity has been found. May be required for rapid internodal elongation in deepwater rice during submergence. This is Expansin-A18 (EXPA18) from Oryza sativa subsp. japonica (Rice).